A 341-amino-acid polypeptide reads, in one-letter code: tRNA N6-adenosine threonylcarbamoyltransferase (341 aa).

The Fe cation site is built by His-111 and His-115. Residues 134 to 138, Asp-167, Gly-180, and Asn-276 each bind substrate; that span reads LVSGG. A Fe cation-binding site is contributed by Asp-304.

This sequence belongs to the KAE1 / TsaD family. Fe(2+) is required as a cofactor.

The protein localises to the cytoplasm. It catalyses the reaction L-threonylcarbamoyladenylate + adenosine(37) in tRNA = N(6)-L-threonylcarbamoyladenosine(37) in tRNA + AMP + H(+). In terms of biological role, required for the formation of a threonylcarbamoyl group on adenosine at position 37 (t(6)A37) in tRNAs that read codons beginning with adenine. Is involved in the transfer of the threonylcarbamoyl moiety of threonylcarbamoyl-AMP (TC-AMP) to the N6 group of A37, together with TsaE and TsaB. TsaD likely plays a direct catalytic role in this reaction. The sequence is that of tRNA N6-adenosine threonylcarbamoyltransferase from Ectopseudomonas mendocina (strain ymp) (Pseudomonas mendocina).